Reading from the N-terminus, the 340-residue chain is Putative esterase YheT (340 aa).

The region spanning 73–312 is the AB hydrolase-1 domain; sequence PRLVVFHGLE…TEHGGHVGFI (240 aa). Catalysis depends on charge relay system residues Ser153, Asp280, and His308.

This sequence belongs to the AB hydrolase superfamily. AB hydrolase 4 family.

This Escherichia coli (strain K12) protein is Putative esterase YheT (yheT).